The sequence spans 889 residues: Envelope glycoprotein gp160 (889 aa).

An N-terminal signal peptide occupies residues 1–22; it reads MGCLGNQLLIALLLLSASGIYC. Topologically, residues 23-704 are extracellular; that stretch reads VQYVTVFYGI…TSWIKYIQYG (682 aa). A glycan (N-linked (GlcNAc...) asparagine; by host) is linked at Asn37. Cys44 and Cys57 are joined by a disulfide. N-linked (GlcNAc...) asparagine; by host glycans are attached at residues Asn70 and Asn114. 5 disulfide bridges follow: Cys101/Cys226, Cys108/Cys217, Cys113/Cys175, Cys239/Cys269, and Cys249/Cys261. Positions 113–174 are V1; the sequence is CNKSETDRWG…TGLEQEPMVS (62 aa). The interval 120 to 145 is disordered; the sequence is RWGLTGTPAPTTTQTTTTQASTTPTS. Residues 126–145 are compositionally biased toward low complexity; that stretch reads TPAPTTTQTTTTQASTTPTS. N-linked (GlcNAc...) asparagine; by host glycans are attached at residues Asn153, Asn163, Asn178, Asn191, Asn206, Asn218, Asn250, Asn253, Asn260, Asn284, Asn290, Asn301, Asn312, Asn322, Asn377, Asn422, Asn470, Asn486, and Asn489. The segment at 175–217 is V2; the sequence is CKFNMTGLKRDKKREYNETWYSRDLVCEQNSNETDSKCYMNHC. The tract at residues 317–349 is V3; sequence CRRPGNKTVLPVTIMSGLVFHSQPINERPKQAW. The cysteines at positions 317 and 350 are disulfide-linked. 2 disulfides stabilise this stretch: Cys401–Cys469 and Cys408–Cys442. Positions 408–442 are V4; sequence CKMNWFLNWVENIQNGSRWTSQNQKERQRRNYVPC. The tract at residues 485–492 is V5; that stretch reads GNETNITM. The interval 536–556 is fusion peptide; the sequence is GVFVLGFLGFLATAGSAMSAA. The tract at residues 599-615 is immunosuppression; sequence LQTRVTAIEKYLKDQAQ. 3 N-linked (GlcNAc...) asparagine; by host glycosylation sites follow: Asn635, Asn644, and Asn660. The stretch at 648–675 forms a coiled coil; the sequence is QEWEKQVNFLEANITQSLEEAQIQQEKN. The interval 681–702 is MPER; binding to GalCer; the sequence is KLNSWDIFGNWFDLTSWIKYIQ. A helical membrane pass occupies residues 705–725; the sequence is VLIVLGVIGLRIVIYVVQMLA. The Cytoplasmic portion of the chain corresponds to 726–889; sequence RLRQGYRPVF…IRQGLELTLL (164 aa). A YXXV motif; contains endocytosis signal motif is present at residues 731–734; sequence YRPV. A lipid anchor (S-palmitoyl cysteine; by host) is attached at Cys797. The Di-leucine internalization motif signature appears at 888-889; that stretch reads LL.

As to quaternary structure, the mature envelope protein (Env) consists of a homotrimer of non-covalently associated gp120-gp41 heterodimers. The resulting complex protrudes from the virus surface as a spike. Interacts with host CD4 and CCR5. Gp120 also interacts with the C-type lectins CD209/DC-SIGN and CLEC4M/DC-SIGNR (collectively referred to as DC-SIGN(R)). The mature envelope protein (Env) consists of a homotrimer of non-covalently associated gp120-gp41 heterodimers. The resulting complex protrudes from the virus surface as a spike. Specific enzymatic cleavages in vivo yield mature proteins. Envelope glycoproteins are synthesized as an inactive precursor that is heavily N-glycosylated and processed likely by host cell furin in the Golgi to yield the mature SU and TM proteins. The cleavage site between SU and TM requires the minimal sequence [KR]-X-[KR]-R. Post-translationally, palmitoylation of the transmembrane protein and of Env polyprotein (prior to its proteolytic cleavage) is essential for their association with host cell membrane lipid rafts. Palmitoylation is therefore required for envelope trafficking to classical lipid rafts, but not for viral replication.

It is found in the virion membrane. The protein resides in the host cell membrane. Its subcellular location is the host endosome membrane. In terms of biological role, the surface protein gp120 (SU) attaches the virus to the host lymphoid cell by binding to the primary receptor CD4. This interaction induces a structural rearrangement creating a high affinity binding site for a chemokine coreceptor like CCR5. This peculiar 2 stage receptor-interaction strategy allows gp120 to maintain the highly conserved coreceptor-binding site in a cryptic conformation, protected from neutralizing antibodies. These changes are transmitted to the transmembrane protein gp41 and are thought to activate its fusogenic potential by unmasking its fusion peptide. Its function is as follows. Surface protein gp120 (SU) may target the virus to gut-associated lymphoid tissue (GALT) by binding host ITGA4/ITGB7 (alpha-4/beta-7 integrins), a complex that mediates T-cell migration to the GALT. Interaction between gp120 and ITGA4/ITGB7 would allow the virus to enter GALT early in the infection, infecting and killing most of GALT's resting CD4+ T-cells. This T-cell depletion is believed to be the major insult to the host immune system leading to AIDS. The surface protein gp120 is a ligand for CD209/DC-SIGN and CLEC4M/DC-SIGNR, which are respectively found on dendritic cells (DCs), and on endothelial cells of liver sinusoids and lymph node sinuses. These interactions allow capture of viral particles at mucosal surfaces by these cells and subsequent transmission to permissive cells. DCs are professional antigen presenting cells, critical for host immunity by inducing specific immune responses against a broad variety of pathogens. They act as sentinels in various tissues where they take up antigen, process it, and present it to T-cells following migration to lymphoid organs. SIV subverts the migration properties of dendritic cells to gain access to CD4+ T-cells in lymph nodes. Virus transmission to permissive T-cells occurs either in trans (without DCs infection, through viral capture and transmission), or in cis (following DCs productive infection, through the usual CD4-gp120 interaction), thereby inducing a robust infection. In trans infection, bound virions remain infectious over days and it is proposed that they are not degraded, but protected in non-lysosomal acidic organelles within the DCs close to the cell membrane thus contributing to the viral infectious potential during DCs' migration from the periphery to the lymphoid tissues. On arrival at lymphoid tissues, intact virions recycle back to DCs' cell surface allowing virus transmission to CD4+ T-cells. Virion capture also seems to lead to MHC-II-restricted viral antigen presentation, and probably to the activation of SIV-specific CD4+ cells. Functionally, the transmembrane protein gp41 (TM) acts as a class I viral fusion protein. Under the current model, the protein has at least 3 conformational states: pre-fusion native state, pre-hairpin intermediate state, and post-fusion hairpin state. During fusion of viral and target intracellular membranes, the coiled coil regions (heptad repeats) assume a trimer-of-hairpins structure, positioning the fusion peptide in close proximity to the C-terminal region of the ectodomain. The formation of this structure appears to drive apposition and subsequent fusion of viral and target cell membranes. Complete fusion occurs in host cell endosomes. The virus undergoes clathrin-dependent internalization long before endosomal fusion, thus minimizing the surface exposure of conserved viral epitopes during fusion and reducing the efficacy of inhibitors targeting these epitopes. Membranes fusion leads to delivery of the nucleocapsid into the cytoplasm. In terms of biological role, the envelope glycoprotein gp160 precursor down-modulates cell surface CD4 antigen by interacting with it in the endoplasmic reticulum and blocking its transport to the cell surface. Its function is as follows. The gp120-gp41 heterodimer allows rapid transcytosis of the virus through CD4 negative cells such as simple epithelial monolayers of the intestinal, rectal and endocervical epithelial barriers. Both gp120 and gp41 specifically recognize glycosphingolipids galactosyl-ceramide (GalCer) or 3' sulfo-galactosyl-ceramide (GalS) present in the lipid rafts structures of epithelial cells. Binding to these alternative receptors allows the rapid transcytosis of the virus through the epithelial cells. This transcytotic vesicle-mediated transport of virions from the apical side to the basolateral side of the epithelial cells does not involve infection of the cells themselves. The chain is Envelope glycoprotein gp160 (env) from Simian immunodeficiency virus (isolate PBj14/BCL-3) (SIV-sm).